Here is a 35-residue protein sequence, read N- to C-terminus: 5'-methylthioadenosine/S-adenosylhomocysteine nucleosidase (35 aa).

The active-site Proton acceptor is E12.

Belongs to the PNP/UDP phosphorylase family. MtnN subfamily. As to quaternary structure, homodimer.

It catalyses the reaction S-adenosyl-L-homocysteine + H2O = S-(5-deoxy-D-ribos-5-yl)-L-homocysteine + adenine. It carries out the reaction S-methyl-5'-thioadenosine + H2O = 5-(methylsulfanyl)-D-ribose + adenine. The enzyme catalyses 5'-deoxyadenosine + H2O = 5-deoxy-D-ribose + adenine. It functions in the pathway amino-acid biosynthesis; L-methionine biosynthesis via salvage pathway; S-methyl-5-thio-alpha-D-ribose 1-phosphate from S-methyl-5'-thioadenosine (hydrolase route): step 1/2. Catalyzes the irreversible cleavage of the glycosidic bond in both 5'-methylthioadenosine (MTA) and S-adenosylhomocysteine (SAH/AdoHcy) to adenine and the corresponding thioribose, 5'-methylthioribose and S-ribosylhomocysteine, respectively. Also cleaves 5'-deoxyadenosine, a toxic by-product of radical S-adenosylmethionine (SAM) enzymes, into 5-deoxyribose and adenine. Thus, is required for in vivo function of the radical SAM enzymes biotin synthase and lipoic acid synthase, that are inhibited by 5'-deoxyadenosine accumulation. The protein is 5'-methylthioadenosine/S-adenosylhomocysteine nucleosidase (mtnN) of Klebsiella pneumoniae.